We begin with the raw amino-acid sequence, 138 residues long: Small ribosomal subunit protein uS11c (138 aa).

The interval 1–23 is disordered; that stretch reads MAKPIPRIGSRRNGRISSRKSTR. Over residues 9-23 the composition is skewed to basic residues; it reads GSRRNGRISSRKSTR.

This sequence belongs to the universal ribosomal protein uS11 family. As to quaternary structure, part of the 30S ribosomal subunit.

The protein resides in the plastid. The protein localises to the chloroplast. This is Small ribosomal subunit protein uS11c from Cucumis sativus (Cucumber).